Consider the following 397-residue polypeptide: Vacuolar protein sorting-associated protein 37A (397 aa).

The segment at 1–22 (MSWLFPLTKSASSSAAGSPGGL) is disordered. At S18 the chain carries Phosphoserine. The 90-residue stretch at 308 to 397 (KSTFEKKMQR…AMHSQFHAPL (90 aa)) folds into the VPS37 C-terminal domain.

It belongs to the VPS37 family. Component of the ESCRT-I complex (endosomal sorting complex required for transport I) which consists of TSG101, VPS28, a VPS37 protein (VPS37A to -D) and MVB12A or MVB12B in a 1:1:1:1 stoichiometry. Interacts with TSG101, VPS28 and HGS. Component of an ESCRT-I complex (endosomal sorting complex required for transport I) which consists of TSG101, VPS28, VPS37A and UBAP1 in a 1:1:1:1 stoichiometry. In terms of tissue distribution, widely expressed. Examined tissues include heart, brain, placenta, liver, skeletal muscle, kidney and pancreas. More abundant in liver. Strongly decreased or undetected in hepatomas.

The protein localises to the late endosome membrane. It localises to the nucleus. Component of the ESCRT-I complex, a regulator of vesicular trafficking process. Required for the sorting of endocytic ubiquitinated cargos into multivesicular bodies. May be involved in cell growth and differentiation. This Homo sapiens (Human) protein is Vacuolar protein sorting-associated protein 37A (VPS37A).